We begin with the raw amino-acid sequence, 122 residues long: MIQPQTHLNVADNSGARELMCIRIIGASNHRYAHIGDVIVAVIKEAVPNMPLERSEVIRAVIVRTCKELRRDNGMIIRYDDNAAVVIDQEGNPKGTRVFGAIARELRQLNFTKIVSLAPEVL.

The protein belongs to the universal ribosomal protein uL14 family. In terms of assembly, part of the 50S ribosomal subunit.

Its subcellular location is the plastid. It is found in the chloroplast. In terms of biological role, binds to 23S rRNA. This chain is Large ribosomal subunit protein uL14c, found in Liriodendron tulipifera (Tuliptree).